We begin with the raw amino-acid sequence, 668 residues long: MNQKVDIEALHETSINSDQPLLRLQQVSRSFMAGDREFQVLKHIDLAIHTGELVAIIGASGSGKSTLMNILGCLDHASAGSYQVNGQETRELDDDALAALRRDHFGFIFQRYHLLPHLDAVRNVEIPAIYAGTAQTTRHERAQALLTRLGLGGHLQHRPSQMSGGQQQRVSIARALMNGGQVILADEPTGALDTASGKEVMRTLLELHAAGHTVILVTHDPKVAANAERIIEVSDGEIISDRRTAQTTQPAPEAQPATPPGPAPRRLLASLGLFREAFNMAWIALISHRMRTLLTMLGIIIGITSVVSISAIGEGAKRYVLKDIQSIGSNTIDIYAGANFGDSRAKSIETLLPSDVAALNQLYYIDSATPVVGRSMLVRYRNVDVDAQLNGVSSRYFQVRNIQLAAGITFSDQDARRQAQVVVLDHNTAQRLFGPGVNPLGQVILVGKLPCTVIGVTSDHKNLFIAGNTLNLWMPYETAAGRVLGQRHLDSISVRVKDGMPSKAVEEQIKALMLQRHGTKDFFTNNLDSVMQTVQKTSRSLTLLLSLIAVISLVVGGIGVMNIMLVSVTERTREIGIRMAVGARQSDIRQQFLVEAVMVCLMGGVIGIGLSYAIGYLFTLFVQQWEMVFSLASVVTAFACSTLIGVLFGFVPARNAARLDPIEALARD.

Residues 22–260 (LRLQQVSRSF…APEAQPATPP (239 aa)) form the ABC transporter domain. 58–65 (GASGSGKS) contacts ATP. The segment at 242-263 (RRTAQTTQPAPEAQPATPPGPA) is disordered. Residues 245-256 (AQTTQPAPEAQP) are compositionally biased toward low complexity. The next 5 helical transmembrane spans lie at 267–287 (LLASLGLFREAFNMAWIALIS), 293–313 (LLTMLGIIIGITSVVSISAIG), 541–561 (LTLLLSLIAVISLVVGGIGVM), 602–622 (MGGVIGIGLSYAIGYLFTLFV), and 631–651 (LASVVTAFACSTLIGVLFGFV).

This sequence belongs to the ABC transporter superfamily. Macrolide exporter (TC 3.A.1.122) family. Probably part of a tripartite efflux system, which is composed of an inner membrane transporter, a periplasmic membrane fusion protein, and an outer membrane component.

The protein localises to the cell inner membrane. Functionally, probably involved in the export of syringafactins. The protein is Probable syringafactin export ATP-binding/permease protein SyfD of Pseudomonas syringae pv. tomato (strain ATCC BAA-871 / DC3000).